Reading from the N-terminus, the 554-residue chain is Endochitinase (554 aa).

An N-terminal signal peptide occupies residues 1 to 19; that stretch reads MRATLATLAVLALATAVQS. Positions 23 to 398 constitute a GH18 domain; the sequence is ARIVCYFSNW…KILHKHMSSY (376 aa). The cysteines at positions 27 and 52 are disulfide-linked. 76 to 77 serves as a coordination point for chitin; it reads LD. The N-linked (GlcNAc...) asparagine glycan is linked to N85. 103–106 is a binding site for chitin; it reads GGWA. E146 acts as the Proton donor in catalysis. Chitin contacts are provided by residues Y147 and 213 to 216; that span reads MSYD. An N-linked (GlcNAc...) asparagine glycan is attached at N303. W370 is a chitin binding site. The tract at residues 398–494 is disordered; that stretch reads YTVPPPHTEN…VPPTENEVDG (97 aa). Residues 431-457 are compositionally biased toward low complexity; it reads PTTTTAKPASTTKTTVKTTTTTTAKPP. The span at 467-477 shows a compositional bias: basic and acidic residues; sequence INVRPEPKPEP. The Chitin-binding type-2 domain occupies 495 to 553; it reads SEICNSDQDYIPDKKHCDKYWRCVNGEAMQFSCQHGTVFNVELNVCDWPSNATRRECQQ. The cysteines at positions 527 and 540 are disulfide-linked. N-linked (GlcNAc...) asparagine glycosylation occurs at N545.

Belongs to the glycosyl hydrolase 18 family. Chitinase class II subfamily. Epidermis and gut.

The protein resides in the secreted. The catalysed reaction is Random endo-hydrolysis of N-acetyl-beta-D-glucosaminide (1-&gt;4)-beta-linkages in chitin and chitodextrins.. In terms of biological role, digests chitin in the exoskeleton during the molting process. The chain is Endochitinase from Manduca sexta (Tobacco hawkmoth).